The chain runs to 676 residues: Polyunsaturated fatty acid lipoxygenase ALOX15B (676 aa).

The PLAT domain occupies 2 to 124 (AEFRVRVSTG…TLVLQEGTAK (123 aa)). The Ca(2+) site is built by glycine 15, glycine 17, aspartate 39, asparagine 40, glycine 42, glutamate 44, aspartate 85, and alanine 86. Positions 125-676 (VSWADHHPVL…PPLIENSVSI (552 aa)) constitute a Lipoxygenase domain. Residues histidine 373, histidine 378, histidine 553, and isoleucine 676 each coordinate Fe cation.

Belongs to the lipoxygenase family. Fe cation serves as cofactor. Expressed in hair, prostate, lung, ovary, lymph node, spinal cord and cornea.

It localises to the nucleus. The protein resides in the cytoplasm. The protein localises to the cytosol. Its subcellular location is the cell membrane. It is found in the cytoskeleton. It localises to the membrane. The protein resides in the cell junction. The protein localises to the adherens junction. Its subcellular location is the focal adhesion. It carries out the reaction (5Z,8Z,11Z,14Z)-eicosatetraenoate + O2 = (15S)-hydroperoxy-(5Z,8Z,11Z,13E)-eicosatetraenoate. The catalysed reaction is (9Z,12Z)-octadecadienoate + O2 = 13-hydroperoxy-(9Z,11E)-octadecadienoate. It catalyses the reaction (5S)-hydroxy-(6E,8Z,11Z,14Z)-eicosatetraenoate + O2 = (5S)-hydroxy-(15S)-hydroperoxy-(6E,8Z,11Z,13E)-eicosatetraenoate. The enzyme catalyses (5Z,8Z,11Z,14Z)-eicosatetraenoate + O2 = 5-hydroperoxy-(6E,8Z,11Z,14Z)-eicosatetraenoate. It carries out the reaction (5S,6R)-dihydroxy-(7E,9E,11Z,14Z)-eicosatetraenoate + O2 = (5S,6R)-dihydroxy-(15S)-hydroperoxy-(7E,9E,11Z,13E)-eicosatetraenoate. The catalysed reaction is (5S)-hydroperoxy-(6E,8Z,11Z,14Z)-eicosatetraenoate + O2 = (5S,15S)-dihydroperoxy-(6E,8Z,11Z,13E)-eicosatetraenoate. It catalyses the reaction 2-(5Z,8Z,11Z,14Z-eicosatetraenoyl)-glycerol + O2 = 2-[15(S)-hydroperoxy-(5Z,8Z,11Z,13E)-eicosatetraenoyl]-glycerol. The enzyme catalyses (8S)-hydroperoxy-(5Z,9E,11Z,14Z)-eicosatetraenoate + O2 = (8S,15S)-dihydroperoxy-(5Z,9E,11Z,13E)-eicosatetraenoate. It carries out the reaction N-(5Z,8Z,11Z,14Z)-eicosatetraenoyl-L-alanine + O2 = N-(15S)-hydroperoxy-(5Z,8Z,11Z,13E)-eicosatetraenoyl-alanine. The catalysed reaction is N-(5Z,8Z,11Z,14Z)-eicosatetraenoyl-gamma-aminobutanoate + O2 = N-(15S)-hydroperoxy-(5Z,8Z,11Z,13E)-eicosatetraenoyl-gamma-aminobutanoate. It catalyses the reaction N-(5Z,8Z,11Z,14Z)-eicosatetraenoyl-glycine + O2 = N-(15S)-hydroperoxy-(5Z,8Z,11Z,13E)-eicosatetraenoyl-glycine. The enzyme catalyses N-(5Z,8Z,11Z,14Z)-eicosatetraenoyl-taurine + O2 = N-(15S)-hydroperoxy-(5Z,8Z,11Z,13E)-eicosatetraenoyl-taurine. It carries out the reaction 2-(5Z,8Z,11Z,14Z-eicosatetraenoyl)-glycerol + O2 = 2-[12-hydroperoxy-(5Z,8Z,10E,14Z)-eicosatetraenoyl]-glycerol. The catalysed reaction is 1-octadecanoyl-2-(5Z,8Z,11Z,14Z-eicosatetraenoyl)-sn-glycero-3-phosphocholine + O2 = 1-octadecanoyl-2-(15-hydroperoxy-5Z,8Z,11Z,13E-eicosatetraenoyl)-sn-glycero-3-phosphocholine. It catalyses the reaction a 1-acyl-2-(5Z,8Z,11Z,14Z-eicosatetraenoyl)-sn-glycero-3-phospho-(1D-myo-inositol) + O2 = a 1-acyl-2-(15-hydroperoxy-5Z,8Z,11Z,13E-eicosatetraenoyl)-sn-glycero-3-phospho-(1D-myo-inositol). The enzyme catalyses a 1-acyl-2-(8Z,11Z,14Z-eicosatrienoyl)-sn-glycero-3-phospho-(1D-myo-inositol) + O2 = a 1-acyl-2-(15-hydroperoxy-8Z,11Z,13E-eicosatrienoyl)-sn-glycero-3-phospho-(1D-myo-inositol). It carries out the reaction 1-octadecanoyl-2-(5Z,8Z,11Z,14Z)-eicosatetraenoyl-sn-glycero-3-phosphoethanolamine + O2 = 1-octadecanoyl-2-(15-hydroperoxy-5Z,8Z,11Z,13E-eicosatetraenoyl)-sn-glycero-3-phosphoethanolamine. The catalysed reaction is 1-octadecanoyl-2-(5Z,8Z,11Z,14Z-eicosatetraenoyl)-sn-glycero-3-phospho-(1D-myo-inositol) + O2 = 1-octadecanoyl-2-(15-hydroperoxy-5Z,8Z,11Z,13E-eicosatetraenoyl)-sn-glycero-3-phospho-(1D-myo-inositol). It catalyses the reaction (8Z,11Z,14Z)-eicosatrienoate + O2 = 15-hydroperoxy-(8Z,11Z,13E)-eicosatrienoate. The enzyme catalyses (7S)-hydroperoxy-(4Z,8E,10Z,13Z,16Z,19Z)-docosahexaenoate + O2 = (7S,17S)-dihydroperoxy-(4Z,8E,10Z,13Z,15E,19Z)-docosahexaenoate. It carries out the reaction (5Z,8Z,11Z,14Z)-eicosatetraenoate + O2 = 15-hydroperoxy-(5Z,8Z,11Z,13E)-eicosatetraenoate. It functions in the pathway lipid metabolism; hydroperoxy eicosatetraenoic acid biosynthesis. Non-heme iron-containing dioxygenase that catalyzes the stereo-specific peroxidation of free and esterified polyunsaturated fatty acids (PUFAs) generating a spectrum of bioactive lipid mediators. It inserts peroxyl groups at C15 of arachidonate ((5Z,8Z,11Z,14Z)-eicosatetraenoate) producing (15S)-hydroperoxyeicosatetraenoate/(15S)-HPETE. Also peroxidizes linoleate ((9Z,12Z)-octadecadienoate) to 13-hydroperoxyoctadecadienoate/13-HPODE. Oxygenates arachidonyl derivatives such as 2-arachidonoylglycerol (2-AG) leading to the production and extracellular release of 15-hydroxyeicosatetraenoyl glycerol (15-HETE-G) that acts as a peroxisome proliferator-activated receptor alpha agonist. Has the ability to efficiently class-switch ALOX5 pro-inflammatory mediators into anti-inflammatory intermediates. Participates in the sequential oxidations of DHA ((4Z,7Z,10Z,13Z,16Z,19Z)-docosahexaenoate) to generate specialized pro-resolving mediators (SPMs) resolvin D5 ((7S,17S)-diHPDHA), which can actively down-regulate the immune response and have anti-aggregation properties with platelets. In addition to free PUFAs hydrolyzed from phospholipids, it directly oxidizes PUFAs esterified to membrane-bound phospholipids. Has no detectable 8S-lipoxygenase activity on arachidonate but reacts with (8S)-HPETE to produce (8S,15S)-diHPETE. May regulate progression through the cell cycle and cell proliferation. May also regulate cytokine secretion by macrophages and therefore play a role in the immune response. May also regulate macrophage differentiation into proatherogenic foam cells. Functionally, does not convert arachidonic acid to 15S-hydroperoxyeicosatetraenoic acid/(15S)-HPETE. In Homo sapiens (Human), this protein is Polyunsaturated fatty acid lipoxygenase ALOX15B.